The primary structure comprises 1343 residues: DNA-directed RNA polymerase subunit beta (1343 aa).

This sequence belongs to the RNA polymerase beta chain family. The RNAP catalytic core consists of 2 alpha, 1 beta, 1 beta' and 1 omega subunit. When a sigma factor is associated with the core the holoenzyme is formed, which can initiate transcription.

The catalysed reaction is RNA(n) + a ribonucleoside 5'-triphosphate = RNA(n+1) + diphosphate. DNA-dependent RNA polymerase catalyzes the transcription of DNA into RNA using the four ribonucleoside triphosphates as substrates. In Shewanella frigidimarina (strain NCIMB 400), this protein is DNA-directed RNA polymerase subunit beta.